The sequence spans 86 residues: Putative membrane protein insertion efficiency factor (86 aa).

Residues 66–86 (PLHEGGDDPVPPRKNDDNREN) form a disordered region.

This sequence belongs to the UPF0161 family.

The protein localises to the cell inner membrane. Could be involved in insertion of integral membrane proteins into the membrane. This is Putative membrane protein insertion efficiency factor from Proteus mirabilis (strain HI4320).